A 157-amino-acid polypeptide reads, in one-letter code: Capsid protein (157 aa).

Position 2 is an N-acetylserine; by host (Ser-2).

The protein belongs to the virgaviridae capsid protein family.

It localises to the virion. Functionally, capsid protein self-assembles to form rod-shaped virions about 18 nm in diameter with a central canal enclosing the viral genomic RNA. The protein is Capsid protein (CP) of Digitalis lanata (Grecian foxglove).